Reading from the N-terminus, the 452-residue chain is Bifunctional protein GlmU (452 aa).

Positions 1–218 (MKVLILAAGL…IVEVSGVNDR (218 aa)) are pyrophosphorylase. UDP-N-acetyl-alpha-D-glucosamine is bound by residues 6–9 (LAAG), lysine 20, glutamine 68, 73–74 (GT), 95–97 (YGD), glycine 134, glutamate 147, asparagine 162, and asparagine 216. Aspartate 97 contributes to the Mg(2+) binding site. Residue asparagine 216 coordinates Mg(2+). The interval 219–239 (IQLAQLETIAKQRILEKLMLS) is linker. The tract at residues 240-452 (GVTIVDPNST…EELKNADHKE (213 aa)) is N-acetyltransferase. 2 residues coordinate UDP-N-acetyl-alpha-D-glucosamine: arginine 321 and lysine 339. Catalysis depends on histidine 351, which acts as the Proton acceptor. Positions 354 and 365 each coordinate UDP-N-acetyl-alpha-D-glucosamine. Residues alanine 368, 374–375 (NY), serine 393, alanine 411, and arginine 428 contribute to the acetyl-CoA site.

The protein in the N-terminal section; belongs to the N-acetylglucosamine-1-phosphate uridyltransferase family. This sequence in the C-terminal section; belongs to the transferase hexapeptide repeat family. As to quaternary structure, homotrimer. Requires Mg(2+) as cofactor.

The protein resides in the cytoplasm. The catalysed reaction is alpha-D-glucosamine 1-phosphate + acetyl-CoA = N-acetyl-alpha-D-glucosamine 1-phosphate + CoA + H(+). It catalyses the reaction N-acetyl-alpha-D-glucosamine 1-phosphate + UTP + H(+) = UDP-N-acetyl-alpha-D-glucosamine + diphosphate. Its pathway is nucleotide-sugar biosynthesis; UDP-N-acetyl-alpha-D-glucosamine biosynthesis; N-acetyl-alpha-D-glucosamine 1-phosphate from alpha-D-glucosamine 6-phosphate (route II): step 2/2. It participates in nucleotide-sugar biosynthesis; UDP-N-acetyl-alpha-D-glucosamine biosynthesis; UDP-N-acetyl-alpha-D-glucosamine from N-acetyl-alpha-D-glucosamine 1-phosphate: step 1/1. The protein operates within bacterial outer membrane biogenesis; LPS lipid A biosynthesis. Functionally, catalyzes the last two sequential reactions in the de novo biosynthetic pathway for UDP-N-acetylglucosamine (UDP-GlcNAc). The C-terminal domain catalyzes the transfer of acetyl group from acetyl coenzyme A to glucosamine-1-phosphate (GlcN-1-P) to produce N-acetylglucosamine-1-phosphate (GlcNAc-1-P), which is converted into UDP-GlcNAc by the transfer of uridine 5-monophosphate (from uridine 5-triphosphate), a reaction catalyzed by the N-terminal domain. This Fervidobacterium nodosum (strain ATCC 35602 / DSM 5306 / Rt17-B1) protein is Bifunctional protein GlmU.